The chain runs to 304 residues: Insulin-like growth factor 1 receptor (304 aa).

Fibronectin type-III domains are found at residues 1 to 43 (ERTV…TMPA) and 49 to 142 (IPGP…VQAK). The Extracellular portion of the chain corresponds to 1–147 (ERTVISNLRP…YVQAKTTYEN (147 aa)). N-linked (GlcNAc...) asparagine glycans are attached at residues Asn-115 and Asn-128. A helical membrane pass occupies residues 148–168 (FIHLIIALPVAVLLIVGGLVI). Residues 169–304 (MLYVFHRKRN…HMNGGRKNER (136 aa)) are Cytoplasmic-facing. Residue Ser-225 is modified to Phosphoserine; by GSK3-beta. Ser-229 is modified (phosphoserine). The interval 231-304 (ENKPPEPEEL…HMNGGRKNER (74 aa)) is disordered. The span at 237-246 (PEELDLEPEN) shows a compositional bias: acidic residues. Residues 247 to 263 (MESVPLDPSASSSSLPL) are compositionally biased toward low complexity. Positions 264–273 (PDRHSGHKAE) are enriched in basic and acidic residues.

The protein belongs to the protein kinase superfamily. Tyr protein kinase family. Insulin receptor subfamily. Tetramer of 2 alpha and 2 beta chains linked by disulfide bonds. The alpha chains contribute to the formation of the ligand-binding domain, while the beta chain carries the kinase domain. Forms a hybrid receptor with INSR, the hybrid is a tetramer consisting of 1 alpha chain and 1 beta chain of INSR and 1 alpha chain and 1 beta chain of IGF1R. Interacts with ARRB1 and ARRB2. Interacts with GRB10. Interacts with RACK1. Interacts with SOCS1, SOCS2 and SOCS3. Interacts with 14-3-3 proteins. Interacts with NMD2. Interacts with MAP3K5. Interacts with STAT3. Found in a ternary complex with IGF1 and ITGAV:ITGB3 or ITGA6:ITGB4. Interacts (nascent precursor form) with ZFAND2B. Post-translationally, autophosphorylated on tyrosine residues in response to ligand binding. Autophosphorylation occurs in trans, i.e. one subunit of the dimeric receptor phosphorylates tyrosine residues on the other subunit. Autophosphorylation occurs in a sequential manner. While every single phosphorylation increases kinase activity, all three tyrosine residues in the kinase activation loop have to be phosphorylated for optimal activity. Can be autophosphorylated at additional tyrosine residues (in vitro). May also be phosphorylated at tyrosine residues by mTORC2. Autophosphorylated is followed by phosphorylation of juxtamembrane tyrosines and C-terminal serines. Phosphorylation of Ser-225 by GSK-3beta restrains kinase activity and promotes cell surface expression, it requires a priming phosphorylation at Ser-229. Dephosphorylated by PTPN1. Polyubiquitinated in the activation loop through both 'Lys-48' and 'Lys-29' linkages, promoting receptor endocytosis and subsequent degradation by the proteasome. Ubiquitination is facilitated by pre-existing phosphorylation. In terms of processing, sumoylated with SUMO1. Post-translationally, controlled by regulated intramembrane proteolysis (RIP). Undergoes metalloprotease-dependent constitutive ectodomain shedding to produce a membrane-anchored 52 kDa C-Terminal fragment which is further processed by presenilin gamma-secretase to yield an intracellular 50 kDa fragment.

It is found in the cell membrane. It catalyses the reaction L-tyrosyl-[protein] + ATP = O-phospho-L-tyrosyl-[protein] + ADP + H(+). With respect to regulation, activated by autophosphorylation at tyrosines in the kinase activation loop; phosphorylation at all three tyrosine residues is required for optimal kinase activity. Inhibited by MSC1609119A-1, BMS-754807, PQIP, benzimidazole pyridinone, isoquinolinedione, bis-azaindole, 3-cyanoquinoline, 2,4-bis-arylamino-1,3-pyrimidine, pyrrolopyrimidine, pyrrole-5-carboxaldehyde, picropodophyllin (PPP), tyrphostin derivatives. While most inhibitors bind to the ATP binding pocket, MSC1609119A-1 functions as allosteric inhibitor and binds close to the DFG motif and the activation loop. Functionally, receptor tyrosine kinase which mediates actions of insulin-like growth factor 1 (IGF1). Binds IGF1 with high affinity and IGF2 and insulin (INS) with a lower affinity. The activated IGF1R is involved in cell growth and survival control. IGF1R is crucial for tumor transformation and survival of malignant cell. Ligand binding activates the receptor kinase, leading to receptor autophosphorylation, and tyrosines phosphorylation of multiple substrates, that function as signaling adapter proteins including, the insulin-receptor substrates (IRS1/2), Shc and 14-3-3 proteins. Phosphorylation of IRSs proteins lead to the activation of two main signaling pathways: the PI3K-AKT/PKB pathway and the Ras-MAPK pathway. The result of activating the MAPK pathway is increased cellular proliferation, whereas activating the PI3K pathway inhibits apoptosis and stimulates protein synthesis. Phosphorylated IRS1 can activate the 85 kDa regulatory subunit of PI3K (PIK3R1), leading to activation of several downstream substrates, including protein AKT/PKB. AKT phosphorylation, in turn, enhances protein synthesis through mTOR activation and triggers the antiapoptotic effects of IGFIR through phosphorylation and inactivation of BAD. In parallel to PI3K-driven signaling, recruitment of Grb2/SOS by phosphorylated IRS1 or Shc leads to recruitment of Ras and activation of the ras-MAPK pathway. In addition to these two main signaling pathways IGF1R signals also through the Janus kinase/signal transducer and activator of transcription pathway (JAK/STAT). Phosphorylation of JAK proteins can lead to phosphorylation/activation of signal transducers and activators of transcription (STAT) proteins. In particular activation of STAT3, may be essential for the transforming activity of IGF1R. The JAK/STAT pathway activates gene transcription and may be responsible for the transforming activity. JNK kinases can also be activated by the IGF1R. IGF1 exerts inhibiting activities on JNK activation via phosphorylation and inhibition of MAP3K5/ASK1, which is able to directly associate with the IGF1R. When present in a hybrid receptor with INSR, binds IGF1. This chain is Insulin-like growth factor 1 receptor (IGF1R), found in Sus scrofa (Pig).